The chain runs to 815 residues: Polyribonucleotide nucleotidyltransferase (815 aa).

2 residues coordinate Mg(2+): D489 and D495. A KH domain is found at 556-615; sequence PRFYTLQIPTDKIRDLIGPGGKVIRGIVEATGVKIDVEDSGKVNVASSDQEAAKKALKMI. The S1 motif domain maps to 625–692; the sequence is GKTYLGTVTR…DGNRIKLSRK (68 aa). The tract at residues 700 to 815 is disordered; sequence AKMATEGGGD…GGGGGGRGRG (116 aa). Positions 723 to 734 are enriched in gly residues; sequence APGGVTFEGGYE. Over residues 735–745 the composition is skewed to acidic residues; it reads GGDEPEVEEGE. Gly residues predominate over residues 775–815; it reads PHGGGGGAGRGGRGRRPGGGGGGGRGGHGGRGGGGGGRGRG.

Belongs to the polyribonucleotide nucleotidyltransferase family. The cofactor is Mg(2+).

It localises to the cytoplasm. The enzyme catalyses RNA(n+1) + phosphate = RNA(n) + a ribonucleoside 5'-diphosphate. Functionally, involved in mRNA degradation. Catalyzes the phosphorolysis of single-stranded polyribonucleotides processively in the 3'- to 5'-direction. The polypeptide is Polyribonucleotide nucleotidyltransferase (Koribacter versatilis (strain Ellin345)).